The sequence spans 285 residues: Foldase protein PrsA 2 (285 aa).

The N-terminal stretch at 1–20 (MRGKHIFIITALISILMLAA) is a signal peptide. Cys-21 carries N-palmitoyl cysteine lipidation. Cys-21 carries the S-diacylglycerol cysteine lipid modification. A PpiC domain is found at 134–224 (KPEIKASHIL…NGYHIIKLTG (91 aa)).

This sequence belongs to the PrsA family.

It localises to the cell membrane. The enzyme catalyses [protein]-peptidylproline (omega=180) = [protein]-peptidylproline (omega=0). In terms of biological role, plays a major role in protein secretion by helping the post-translocational extracellular folding of several secreted proteins. Important for the secretion of the protective antigen. The three PsrA proteins in this organism show different but overlapping substrate specificities. In Bacillus anthracis, this protein is Foldase protein PrsA 2 (prsA2).